A 147-amino-acid chain; its full sequence is Leghemoglobin 3 (147 aa).

The 146-residue stretch at 2–147 (GFTAQQEALV…LATAIKKAMG (146 aa)) folds into the Globin domain. Residue tyrosine 30 is modified to Nitrated tyrosine. Serine 45 provides a ligand contact to heme b. A Phosphoserine modification is found at serine 45. O2 is bound at residue histidine 61. Heme b-binding residues include lysine 64, histidine 93, and lysine 96. Position 135 is a nitrated tyrosine (tyrosine 135).

Belongs to the plant globin family. As to quaternary structure, monomer. Post-translationally, nitrated in effective nodules and particularly in hypoxic conditions; this mechanism may play a protective role in the symbiosis by buffering toxic peroxynitrite NO(2)(-). Nitration level decrease during nodule senescence. Phosphorylation at Ser-45 disrupts the molecular environment of its porphyrin ring oxygen binding pocket, thus leading to a reduced oxygen consumption and to the delivery of oxygen O(2) to symbiosomes. Specifically and strongly expressed in root nodules and at low levels in seedlings.

The protein localises to the cytoplasm. The protein resides in the cytosol. It is found in the nucleus. Leghemoglobin that reversibly binds oxygen O(2) through a pentacoordinated heme iron. In root nodules, facilitates the diffusion of oxygen to the bacteroids while preventing the bacterial nitrogenase from being inactivated by buffering dioxygen, nitric oxide and carbon monoxide, and promoting the formation of reactive oxygen species (ROS, e.g. H(2)O(2)). This role is essential for symbiotic nitrogen fixation (SNF). The protein is Leghemoglobin 3 of Lotus japonicus (Lotus corniculatus var. japonicus).